We begin with the raw amino-acid sequence, 45 residues long: Thymosin beta-15A homolog (45 aa).

Residues 19–45 form a disordered region; sequence KKTNTEEKNTLPSKETIEQEKECVKSS. The span at 21–45 shows a compositional bias: basic and acidic residues; that stretch reads TNTEEKNTLPSKETIEQEKECVKSS.

It belongs to the thymosin beta family.

The protein resides in the cytoplasm. Its subcellular location is the cytoskeleton. Functionally, plays an important role in the organization of the cytoskeleton. Binds to and sequesters actin monomers (G actin) and therefore inhibits actin polymerization. In Coturnix japonica (Japanese quail), this protein is Thymosin beta-15A homolog.